A 171-amino-acid polypeptide reads, in one-letter code: Large ribosomal subunit protein uL10 (171 aa).

This sequence belongs to the universal ribosomal protein uL10 family. As to quaternary structure, part of the ribosomal stalk of the 50S ribosomal subunit. The N-terminus interacts with L11 and the large rRNA to form the base of the stalk. The C-terminus forms an elongated spine to which L12 dimers bind in a sequential fashion forming a multimeric L10(L12)X complex.

Its function is as follows. Forms part of the ribosomal stalk, playing a central role in the interaction of the ribosome with GTP-bound translation factors. The chain is Large ribosomal subunit protein uL10 from Corynebacterium glutamicum (strain ATCC 13032 / DSM 20300 / JCM 1318 / BCRC 11384 / CCUG 27702 / LMG 3730 / NBRC 12168 / NCIMB 10025 / NRRL B-2784 / 534).